A 315-amino-acid chain; its full sequence is Olfactory receptor 5AN6 (315 aa).

Residues 1 to 29 (MPGGRNSTVITKFILVGFSDFPKLKLVLF) lie on the Extracellular side of the membrane. A helical transmembrane segment spans residues 30–50 (VIFLGSYLSTVVWNLGLIILI). At 51 to 54 (RIDP) the chain is on the cytoplasmic side. The chain crosses the membrane as a helical span at residues 55-75 (YLHTPMYFFLSNLSFLDFCYI). Residues 76-99 (SSTTPKMLSGFFQKSKSISFVGCT) are Extracellular-facing. Cys98 and Cys180 are disulfide-bonded. The chain crosses the membrane as a helical span at residues 100 to 120 (MQYFIFSSLGLSECCLLAAMA). The Cytoplasmic segment spans residues 121–123 (YDR). Residues 124-143 (YAAICNPLLYTAIMSPSLCV) traverse the membrane as a helical segment. Position 144 (His144) is a topological domain, extracellular. Residues 145-165 (MVVGAYSTGLLGSLIQLCAIL) traverse the membrane as a helical segment. The Cytoplasmic segment spans residues 166-202 (QLHFCGPNIINHFFCDLPQLLVLSCSETFPLQVLKFV). Residues 203-223 (IAVIFGVASVIVILISYGYII) traverse the membrane as a helical segment. Topologically, residues 224 to 240 (GTILNISSVEGRSKAFN) are extracellular. The helical transmembrane segment at 241–261 (TCASHLTAVTLFFGSGLFVYM) threads the bilayer. The Cytoplasmic portion of the chain corresponds to 262–272 (RPSSNSSQGYD). Residues 273–293 (KMASVFYTVVIPMLNPLIYSL) form a helical membrane-spanning segment. The Extracellular segment spans residues 294–315 (RNKEIKDALQRCKNKCFSQCHC).

This sequence belongs to the G-protein coupled receptor 1 family. As to expression, localized in the dorsomedial and ventral region of the olfactory bulb.

The protein localises to the cell membrane. Odorant receptor specific for muscone. Muscone-binding causes a conformation change that triggers signaling via G(s)-class of G alpha protein GNAL, activating adenylyl cyclase. The protein is Olfactory receptor 5AN6 of Mus musculus (Mouse).